An 87-amino-acid polypeptide reads, in one-letter code: Small ribosomal subunit protein bS20 (87 aa).

The protein belongs to the bacterial ribosomal protein bS20 family.

In terms of biological role, binds directly to 16S ribosomal RNA. The polypeptide is Small ribosomal subunit protein bS20 (Rhizorhabdus wittichii (strain DSM 6014 / CCUG 31198 / JCM 15750 / NBRC 105917 / EY 4224 / RW1) (Sphingomonas wittichii)).